The sequence spans 307 residues: tRNA dimethylallyltransferase (307 aa).

16–23 (GCTAVGKT) provides a ligand contact to ATP. Residue 18–23 (TAVGKT) participates in substrate binding. The interval 41 to 44 (DSLL) is interaction with substrate tRNA.

It belongs to the IPP transferase family. Monomer. The cofactor is Mg(2+).

The enzyme catalyses adenosine(37) in tRNA + dimethylallyl diphosphate = N(6)-dimethylallyladenosine(37) in tRNA + diphosphate. In terms of biological role, catalyzes the transfer of a dimethylallyl group onto the adenine at position 37 in tRNAs that read codons beginning with uridine, leading to the formation of N6-(dimethylallyl)adenosine (i(6)A). The chain is tRNA dimethylallyltransferase from Opitutus terrae (strain DSM 11246 / JCM 15787 / PB90-1).